The following is a 421-amino-acid chain: UDP-N-acetylglucosamine 1-carboxyvinyltransferase (421 aa).

22–23 (KN) contacts phosphoenolpyruvate. Arginine 91 contacts UDP-N-acetyl-alpha-D-glucosamine. Catalysis depends on cysteine 115, which acts as the Proton donor. At cysteine 115 the chain carries 2-(S-cysteinyl)pyruvic acid O-phosphothioketal. UDP-N-acetyl-alpha-D-glucosamine-binding positions include 120-124 (RPIDL), aspartate 306, and isoleucine 328.

It belongs to the EPSP synthase family. MurA subfamily.

It localises to the cytoplasm. It catalyses the reaction phosphoenolpyruvate + UDP-N-acetyl-alpha-D-glucosamine = UDP-N-acetyl-3-O-(1-carboxyvinyl)-alpha-D-glucosamine + phosphate. It participates in cell wall biogenesis; peptidoglycan biosynthesis. In terms of biological role, cell wall formation. Adds enolpyruvyl to UDP-N-acetylglucosamine. This chain is UDP-N-acetylglucosamine 1-carboxyvinyltransferase, found in Methylacidiphilum infernorum (isolate V4) (Methylokorus infernorum (strain V4)).